The sequence spans 148 residues: Large ribosomal subunit protein bL9 (148 aa).

The protein belongs to the bacterial ribosomal protein bL9 family.

Binds to the 23S rRNA. The chain is Large ribosomal subunit protein bL9 from Finegoldia magna (strain ATCC 29328 / DSM 20472 / WAL 2508) (Peptostreptococcus magnus).